The following is an 85-amino-acid chain: Cytochrome b (85 aa).

3 helical membrane-spanning segments follow: residues 1-8 (LTGLFLAM), 32-53 (WLIR…YLHI), and 68-85 (WNVG…AFVG). Residues His-38 and His-52 each contribute to the heme b site.

The protein belongs to the cytochrome b family. As to quaternary structure, the cytochrome bc1 complex contains 3 respiratory subunits (MT-CYB, CYC1 and UQCRFS1), 2 core proteins (UQCRC1 and UQCRC2) and probably 6 low-molecular weight proteins. Heme b is required as a cofactor.

Its subcellular location is the mitochondrion inner membrane. Functionally, component of the ubiquinol-cytochrome c reductase complex (complex III or cytochrome b-c1 complex) that is part of the mitochondrial respiratory chain. The b-c1 complex mediates electron transfer from ubiquinol to cytochrome c. Contributes to the generation of a proton gradient across the mitochondrial membrane that is then used for ATP synthesis. The sequence is that of Cytochrome b (mt-cyb) from Pomoxis nigromaculatus (Black crappie).